The following is a 523-amino-acid chain: DNA primase (523 aa).

The CHC2-type zinc finger occupies 37-61 (CPFHAEKTPSFFVNPLQGYFYCFGC). The Toprim domain maps to 259 to 340 (KSVILVEGYI…NVSVVRMDFG (82 aa)). Residues Glu-265, Asp-309, and Asp-311 each coordinate Mg(2+).

The protein belongs to the DnaG primase family. Monomer. Interacts with DnaB. Zn(2+) is required as a cofactor. Requires Mg(2+) as cofactor.

It carries out the reaction ssDNA + n NTP = ssDNA/pppN(pN)n-1 hybrid + (n-1) diphosphate.. In terms of biological role, RNA polymerase that catalyzes the synthesis of short RNA molecules used as primers for DNA polymerase during DNA replication. The polypeptide is DNA primase (Borreliella burgdorferi (strain ATCC 35210 / DSM 4680 / CIP 102532 / B31) (Borrelia burgdorferi)).